Reading from the N-terminus, the 475-residue chain is MSWRPQYRCSKFRNVYGKVASRENCYDCIPITKNVHDNHFCAVNPKFLAIVTESAGGGSFFVIPLHQTGRIEPNYPKVCGHQGTVLDIKWNPFIENIIASCSEDTSVRIWEIPDGGLKRNMTEAVLELYGHSRRVGLIEWHPTAINILFSAGYDYKILIWNLDVGEAVKMIDCHTDVILCMSFNTDGSLMATTCKDKKLRVLEPRSGRVLQETTCKNHKVTRVVFFGDMKRLLTTGVSKWNTRQIALWDQEDLSMPVTEEEIDGLSGLLFPFYDVDTHMLYLAGKGDGNIRYYEITAEKPYLTYLMEFRSPAPQKGLGVMPKHGLDVSACEIFRFYKLVTLKNQIEPISMIVPRRSENYQEDIYPMTSGTEPALSPDEWLRGVNKGPVLMSLKEGYRKENKAIYKAPVKEKKSLVVNGIDLLENVPPRTENELLRMFFKQQEEIRRLKEQLSQRDLLVRQLELELKNLRNSPKDS.

5 WD repeats span residues G80–N120, G130–D172, H174–E212, C215–T258, and E260–T303. Residues N431 to N470 adopt a coiled-coil conformation.

Belongs to the WD repeat coronin family.

Its subcellular location is the cytoplasm. The protein resides in the cytoskeleton. Functionally, may play a role in the reorganization of neuronal actin structure. This Xenopus laevis (African clawed frog) protein is Coronin-2B (coro2b).